We begin with the raw amino-acid sequence, 234 residues long: Phosphoribosylaminoimidazole-succinocarboxamide synthase (234 aa).

This sequence belongs to the SAICAR synthetase family.

The enzyme catalyses 5-amino-1-(5-phospho-D-ribosyl)imidazole-4-carboxylate + L-aspartate + ATP = (2S)-2-[5-amino-1-(5-phospho-beta-D-ribosyl)imidazole-4-carboxamido]succinate + ADP + phosphate + 2 H(+). It participates in purine metabolism; IMP biosynthesis via de novo pathway; 5-amino-1-(5-phospho-D-ribosyl)imidazole-4-carboxamide from 5-amino-1-(5-phospho-D-ribosyl)imidazole-4-carboxylate: step 1/2. The sequence is that of Phosphoribosylaminoimidazole-succinocarboxamide synthase from Streptococcus pyogenes serotype M18 (strain MGAS8232).